The chain runs to 28 residues: Conotoxin as14b (28 aa).

Intrachain disulfides connect Cys-7–Cys-27 and Cys-11–Cys-23.

Belongs to the conotoxin L superfamily. Expressed by the venom duct.

It localises to the secreted. In vivo, intracranial injection elicits scratching and grooming activity in mice, and causes body and rear limb extension and tail curling immediately upon injection. The protein is Conotoxin as14b of Conus cancellatus (Cancellate cone).